The primary structure comprises 359 residues: Histidinol-phosphate aminotransferase (359 aa).

Residue lysine 217 is modified to N6-(pyridoxal phosphate)lysine.

It belongs to the class-II pyridoxal-phosphate-dependent aminotransferase family. Histidinol-phosphate aminotransferase subfamily. Homodimer. Pyridoxal 5'-phosphate is required as a cofactor.

It carries out the reaction L-histidinol phosphate + 2-oxoglutarate = 3-(imidazol-4-yl)-2-oxopropyl phosphate + L-glutamate. The protein operates within amino-acid biosynthesis; L-histidine biosynthesis; L-histidine from 5-phospho-alpha-D-ribose 1-diphosphate: step 7/9. The sequence is that of Histidinol-phosphate aminotransferase from Salmonella paratyphi A (strain ATCC 9150 / SARB42).